Consider the following 754-residue polypeptide: Phosphoribosylformylglycinamidine synthase subunit PurL (754 aa).

The tract at residues 1–21 (MLDTVEHAATTPDQPQPYGEL) is disordered. Histidine 54 is an active-site residue. Residues tyrosine 57 and lysine 101 each coordinate ATP. Residue glutamate 103 coordinates Mg(2+). Residues 104–107 (SHNH) and arginine 126 each bind substrate. Histidine 105 (proton acceptor) is an active-site residue. Aspartate 127 lines the Mg(2+) pocket. Glutamine 252 lines the substrate pocket. Aspartate 280 is a Mg(2+) binding site. Position 324 to 326 (324 to 326 (ESQ)) interacts with substrate. ATP-binding residues include asparagine 512 and glycine 549. A Mg(2+)-binding site is contributed by asparagine 550. Residue serine 552 coordinates substrate.

Belongs to the FGAMS family. As to quaternary structure, monomer. Part of the FGAM synthase complex composed of 1 PurL, 1 PurQ and 2 PurS subunits.

Its subcellular location is the cytoplasm. It catalyses the reaction N(2)-formyl-N(1)-(5-phospho-beta-D-ribosyl)glycinamide + L-glutamine + ATP + H2O = 2-formamido-N(1)-(5-O-phospho-beta-D-ribosyl)acetamidine + L-glutamate + ADP + phosphate + H(+). It functions in the pathway purine metabolism; IMP biosynthesis via de novo pathway; 5-amino-1-(5-phospho-D-ribosyl)imidazole from N(2)-formyl-N(1)-(5-phospho-D-ribosyl)glycinamide: step 1/2. In terms of biological role, part of the phosphoribosylformylglycinamidine synthase complex involved in the purines biosynthetic pathway. Catalyzes the ATP-dependent conversion of formylglycinamide ribonucleotide (FGAR) and glutamine to yield formylglycinamidine ribonucleotide (FGAM) and glutamate. The FGAM synthase complex is composed of three subunits. PurQ produces an ammonia molecule by converting glutamine to glutamate. PurL transfers the ammonia molecule to FGAR to form FGAM in an ATP-dependent manner. PurS interacts with PurQ and PurL and is thought to assist in the transfer of the ammonia molecule from PurQ to PurL. The protein is Phosphoribosylformylglycinamidine synthase subunit PurL of Mycobacterium bovis (strain ATCC BAA-935 / AF2122/97).